The primary structure comprises 226 residues: DNA mismatch repair protein MutH (226 aa).

The protein belongs to the MutH family.

The protein localises to the cytoplasm. In terms of biological role, sequence-specific endonuclease that cleaves unmethylated GATC sequences. It is involved in DNA mismatch repair. This chain is DNA mismatch repair protein MutH, found in Vibrio campbellii (strain ATCC BAA-1116).